The sequence spans 201 residues: Large ribosomal subunit protein uL4 (201 aa).

The tract at residues 46–71 (QKTRAEVVGSGKKPWRQKGTGRARAG) is disordered.

Belongs to the universal ribosomal protein uL4 family. As to quaternary structure, part of the 50S ribosomal subunit.

Its function is as follows. One of the primary rRNA binding proteins, this protein initially binds near the 5'-end of the 23S rRNA. It is important during the early stages of 50S assembly. It makes multiple contacts with different domains of the 23S rRNA in the assembled 50S subunit and ribosome. Forms part of the polypeptide exit tunnel. This is Large ribosomal subunit protein uL4 from Shewanella piezotolerans (strain WP3 / JCM 13877).